Reading from the N-terminus, the 539-residue chain is MAAKDVKFGNDARVKMLNGVNILADAVKVTLGPKGRNVVLDKSFGAPTITKDGVSVAREIELEDKFENMGAQMVKEVASKANDAAGDGTTTATVLAQAIVNEGLKAVAAGMNPMDLKRGIDKAVIAAVEELKKLSVPCSDSKAIAQVGTISANSDETVGKLIAEAMEKVGKEGVITVEEGTGLQDELDVVEGMQFDRGYLSPYFINKPETGSVELESPFILLADKKVSNIRELLPVLEAVAKAGKPLLIVAEDVEGEALATLVVNTMRGIVKVAAVKAPGFGDRRKAMLQDIATLTAGTVISEEIGMELEKATLEDLGQAKRVVINKDTTIIIDGIGDEATIQGRVAQIRQQIEEATSDYDREKLQERVAKLAGGVAVIKVGAATEVEMKEKKARVEDALHATRAAVEEGVVAGGGVALIRVASKIAELKGDNEDQNVGIKVALRAMEAPLRQIVINAGEEASVIANSVKAGEGSYGYNAYSEEYGDMIGMGILDPTKVTRSALQYAASVAGLMITTECMVTDLPKEDKADMGAAGMGG.

Residues 30 to 33 (TLGP), Lys51, 87 to 91 (DGTTT), Gly415, and Asp495 contribute to the ATP site.

Belongs to the chaperonin (HSP60) family. Forms a cylinder of 14 subunits composed of two heptameric rings stacked back-to-back. Interacts with the co-chaperonin GroES.

The protein localises to the cytoplasm. The enzyme catalyses ATP + H2O + a folded polypeptide = ADP + phosphate + an unfolded polypeptide.. In terms of biological role, together with its co-chaperonin GroES, plays an essential role in assisting protein folding. The GroEL-GroES system forms a nano-cage that allows encapsulation of the non-native substrate proteins and provides a physical environment optimized to promote and accelerate protein folding. In Serratia rubidaea (Serratia marinorubra), this protein is Chaperonin GroEL.